Here is an 81-residue protein sequence, read N- to C-terminus: NAD(P)H-quinone oxidoreductase subunit L (81 aa).

Transmembrane regions (helical) follow at residues 13–33 (LLVI…IPLF) and 51–71 (LGIY…APFL).

It belongs to the complex I NdhL subunit family. NDH-1 can be composed of about 15 different subunits; different subcomplexes with different compositions have been identified which probably have different functions.

The protein resides in the cellular thylakoid membrane. It catalyses the reaction a plastoquinone + NADH + (n+1) H(+)(in) = a plastoquinol + NAD(+) + n H(+)(out). The catalysed reaction is a plastoquinone + NADPH + (n+1) H(+)(in) = a plastoquinol + NADP(+) + n H(+)(out). Functionally, NDH-1 shuttles electrons from an unknown electron donor, via FMN and iron-sulfur (Fe-S) centers, to quinones in the respiratory and/or the photosynthetic chain. The immediate electron acceptor for the enzyme in this species is believed to be plastoquinone. Couples the redox reaction to proton translocation, and thus conserves the redox energy in a proton gradient. Cyanobacterial NDH-1 also plays a role in inorganic carbon-concentration. This chain is NAD(P)H-quinone oxidoreductase subunit L, found in Synechococcus sp. (strain WH7803).